Here is a 210-residue protein sequence, read N- to C-terminus: Large ribosomal subunit protein uL3 (210 aa).

The protein belongs to the universal ribosomal protein uL3 family. In terms of assembly, part of the 50S ribosomal subunit. Forms a cluster with proteins L14 and L19.

One of the primary rRNA binding proteins, it binds directly near the 3'-end of the 23S rRNA, where it nucleates assembly of the 50S subunit. In Caldicellulosiruptor bescii (strain ATCC BAA-1888 / DSM 6725 / KCTC 15123 / Z-1320) (Anaerocellum thermophilum), this protein is Large ribosomal subunit protein uL3.